Here is a 331-residue protein sequence, read N- to C-terminus: Serine/threonine-protein phosphatase 6 catalytic subunit (331 aa).

The Mn(2+) site is built by aspartate 79, histidine 81, aspartate 107, and asparagine 139. Histidine 140 functions as the Proton donor in the catalytic mechanism. Mn(2+)-binding residues include histidine 189 and histidine 264.

The protein belongs to the PPP phosphatase family. PP-6 (PP-V) subfamily. In terms of assembly, forms a complex composed of catalytic subunit pph-6 and regulatory subunit saps-1; the interaction increases pph-6 and saps-1 protein stability. The cofactor is Mn(2+).

It is found in the cytoplasm. The protein resides in the cell cortex. The protein localises to the cytoskeleton. Its subcellular location is the spindle pole. It catalyses the reaction O-phospho-L-seryl-[protein] + H2O = L-seryl-[protein] + phosphate. It carries out the reaction O-phospho-L-threonyl-[protein] + H2O = L-threonyl-[protein] + phosphate. Functionally, catalytic subunit of protein phosphatase 6 (PP6). In complex with saps-1, promotes actomyosin contractility during cytokinesis by regulating the organization of cortical non-muscle myosin II nmy-2 and thus contributing to correct spindle positioning. Also required for the proper generation of pulling forces on spindle poles during anaphase by regulating the cortical localization of gpr-1, gpr-2 and lin-5. The chain is Serine/threonine-protein phosphatase 6 catalytic subunit from Caenorhabditis elegans.